The primary structure comprises 463 residues: Methionine aminopeptidase 2-2 (463 aa).

Residues 1-107 are disordered; sequence MGAKTFEGGD…VPLSQLFPDG (107 aa). Acidic residues predominate over residues 37 to 53; that stretch reads EDGDGEFGTDDDDDGDG. Residues 69–83 show a composition bias toward basic residues; that stretch reads PKKRKRSKKKKSNKK. Position 215 (His-215) interacts with substrate. Positions 236, 247, and 316 each coordinate a divalent metal cation. Residue His-324 participates in substrate binding. 2 residues coordinate a divalent metal cation: Glu-349 and Glu-444.

Belongs to the peptidase M24A family. Methionine aminopeptidase eukaryotic type 2 subfamily. Co(2+) serves as cofactor. Zn(2+) is required as a cofactor. Requires Mn(2+) as cofactor. It depends on Fe(2+) as a cofactor.

The protein resides in the cytoplasm. The enzyme catalyses Release of N-terminal amino acids, preferentially methionine, from peptides and arylamides.. In terms of biological role, cotranslationally removes the N-terminal methionine from nascent proteins. The N-terminal methionine is often cleaved when the second residue in the primary sequence is small and uncharged (Met-Ala-, Cys, Gly, Pro, Ser, Thr, or Val). This Talaromyces marneffei (strain ATCC 18224 / CBS 334.59 / QM 7333) (Penicillium marneffei) protein is Methionine aminopeptidase 2-2.